Reading from the N-terminus, the 393-residue chain is Elongation factor Tu (393 aa).

The tr-type G domain maps to 10–203 (KPHVNIGTIG…AVDSYIPEPV (194 aa)). Residues 19 to 26 (GHVDHGKT) are G1. 19-26 (GHVDHGKT) is a binding site for GTP. Residue threonine 26 coordinates Mg(2+). The tract at residues 60 to 64 (GITIS) is G2. The interval 81–84 (DCPG) is G3. GTP contacts are provided by residues 81-85 (DCPGH) and 136-139 (NKVD). Residues 136-139 (NKVD) form a G4 region. Positions 173 to 175 (SAL) are G5.

Belongs to the TRAFAC class translation factor GTPase superfamily. Classic translation factor GTPase family. EF-Tu/EF-1A subfamily. Monomer.

The protein resides in the cytoplasm. The catalysed reaction is GTP + H2O = GDP + phosphate + H(+). In terms of biological role, GTP hydrolase that promotes the GTP-dependent binding of aminoacyl-tRNA to the A-site of ribosomes during protein biosynthesis. This Prosthecochloris aestuarii (strain DSM 271 / SK 413) protein is Elongation factor Tu.